The primary structure comprises 278 residues: Tryptophan synthase alpha chain (278 aa).

Residues Glu-49 and Asp-60 each act as proton acceptor in the active site.

It belongs to the TrpA family. In terms of assembly, tetramer of two alpha and two beta chains.

It catalyses the reaction (1S,2R)-1-C-(indol-3-yl)glycerol 3-phosphate + L-serine = D-glyceraldehyde 3-phosphate + L-tryptophan + H2O. The protein operates within amino-acid biosynthesis; L-tryptophan biosynthesis; L-tryptophan from chorismate: step 5/5. In terms of biological role, the alpha subunit is responsible for the aldol cleavage of indoleglycerol phosphate to indole and glyceraldehyde 3-phosphate. This is Tryptophan synthase alpha chain from Psychrobacter arcticus (strain DSM 17307 / VKM B-2377 / 273-4).